We begin with the raw amino-acid sequence, 431 residues long: Trigger factor (431 aa).

In terms of domain architecture, PPIase FKBP-type spans 158-243 (GDLVAVETWS…VAEVSEPVVP (86 aa)).

The protein belongs to the FKBP-type PPIase family. Tig subfamily.

The protein resides in the cytoplasm. The enzyme catalyses [protein]-peptidylproline (omega=180) = [protein]-peptidylproline (omega=0). Functionally, involved in protein export. Acts as a chaperone by maintaining the newly synthesized protein in an open conformation. Functions as a peptidyl-prolyl cis-trans isomerase. This chain is Trigger factor, found in Stenotrophomonas maltophilia (strain K279a).